The following is a 281-amino-acid chain: E2F-associated phosphoprotein (281 aa).

Met1 carries the post-translational modification N-acetylmethionine. A disordered region spans residues 1-27 (MNRLQDDYDPYAVEEPSDEEPALSSSE). Acidic residues predominate over residues 15–27 (EPSDEEPALSSSE). Ser17 carries the post-translational modification Phosphoserine. Thr37 bears the Phosphothreonine mark. Phosphoserine occurs at positions 109 and 111. Residues 222–245 (PENRRKRRSAKKMRSNPEDPAERE) form a disordered region. Positions 225 to 235 (RRKRRSAKKMR) are enriched in basic residues. Over residues 236-245 (SNPEDPAERE) the composition is skewed to basic and acidic residues.

In terms of assembly, interacts with E2F1. The C-terminal half binds the N-terminal of E2F1. Also interacts with E2F2 and E2F3, but not E2F4.

The protein localises to the cytoplasm. Its subcellular location is the nucleus. In terms of biological role, may play an important role in the fine-tuning of both major E2F1 activities, the regulation of the cell-cycle and the induction of apoptosis. Promotes S-phase entry, and inhibits p14(ARP) expression. This is E2F-associated phosphoprotein (Eapp) from Mus musculus (Mouse).